A 730-amino-acid polypeptide reads, in one-letter code: Patatin-like phospholipase domain-containing protein CIMG_04897 (730 aa).

Residues 1–11 show a composition bias toward basic residues; it reads MTANSSRRRLQ. Residues 1–26 are disordered; sequence MTANSSRRRLQMKSPRTDGDEKEEDY. The helical transmembrane segment at 97–117 threads the bilayer; it reads WPFLLFVLSWIVFLGALYILT. Positions 281–472 constitute a PNPLA domain; it reads LCLSGGATLA…RTDIPLKALD (192 aa). A GXSXG motif is present at residues 312–316; the sequence is GTSGG. Serine 314 serves as the catalytic Nucleophile. Aspartate 459 functions as the Proton acceptor in the catalytic mechanism. Positions 667–730 are disordered; it reads GHFREAPTSH…QGQSSGTKIG (64 aa). Polar residues predominate over residues 721–730; that stretch reads QGQSSGTKIG.

The protein belongs to the PLPL family.

It localises to the membrane. In terms of biological role, probable lipid hydrolase. This chain is Patatin-like phospholipase domain-containing protein CIMG_04897, found in Coccidioides immitis (strain RS) (Valley fever fungus).